Consider the following 280-residue polypeptide: MACRGCLECLLKLLNFLLAVAGLGMIGYGIYLFVEYKRVTDNSVTFDLTNGDQSYVSFGRPILMAVSLSSNIFDNLPKAWFIYLFIGIGVALFVISCCGCVGTCSRSVCCLSCYSLLLILLILVELGFAAFIFFDNSWRDELPSDRTGNFDTIYNFLRENWKIVRWVALGAVVFEALLFLLALMVRAANTPAEYDSDDEYLAPRQQIRQPFINRQAAPVTGVPVAPTLDQRPSRSDPWSARMREKYGLDTSEFTYNPSESHRFQQMPAQPNEEKGRCTIM.

At 1–13 (MACRGCLECLLKL) the chain is on the cytoplasmic side. Residues 14-34 (LNFLLAVAGLGMIGYGIYLFV) form a helical membrane-spanning segment. Topologically, residues 35-78 (EYKRVTDNSVTFDLTNGDQSYVSFGRPILMAVSLSSNIFDNLPK) are extracellular. The helical transmembrane segment at 79-99 (AWFIYLFIGIGVALFVISCCG) threads the bilayer. The Cytoplasmic segment spans residues 100-113 (CVGTCSRSVCCLSC). The helical transmembrane segment at 114 to 134 (YSLLLILLILVELGFAAFIFF) threads the bilayer. Residues 135–162 (DNSWRDELPSDRTGNFDTIYNFLRENWK) lie on the Extracellular side of the membrane. Residues 163–183 (IVRWVALGAVVFEALLFLLAL) form a helical membrane-spanning segment. The Cytoplasmic portion of the chain corresponds to 184 to 280 (MVRAANTPAE…NEEKGRCTIM (97 aa)). 2 positions are modified to phosphoserine: S196 and S233. The tract at residues 258 to 280 (SESHRFQQMPAQPNEEKGRCTIM) is disordered. Basic and acidic residues predominate over residues 271-280 (NEEKGRCTIM).

This sequence belongs to the tetraspanin (TM4SF) family. In terms of assembly, homodimer. Constituent of tobamovirus replication complex. Interacts with TOM1. Expressed in rosette leaves.

It is found in the vacuole membrane. Necessary for the efficient intracellular multiplication of tobamoviruses, being a component of the replication complex. This Arabidopsis thaliana (Mouse-ear cress) protein is Tobamovirus multiplication protein 2A (TOM2A).